The sequence spans 280 residues: Fructose-1,6-bisphosphatase class 1 (280 aa).

Mg(2+)-binding residues include E64, D83, L85, and D86. Residues 86–89, Y189, and K220 each bind substrate; that span reads DGSS. E226 is a binding site for Mg(2+).

Belongs to the FBPase class 1 family. In terms of assembly, homotetramer. It depends on Mg(2+) as a cofactor.

It is found in the cytoplasm. It catalyses the reaction beta-D-fructose 1,6-bisphosphate + H2O = beta-D-fructose 6-phosphate + phosphate. It functions in the pathway carbohydrate biosynthesis; gluconeogenesis. This Campylobacter jejuni subsp. jejuni serotype O:2 (strain ATCC 700819 / NCTC 11168) protein is Fructose-1,6-bisphosphatase class 1.